The primary structure comprises 408 residues: Acetylornithine aminotransferase (408 aa).

Pyridoxal 5'-phosphate is bound by residues 107–108 (GT) and Phe-141. N(2)-acetyl-L-ornithine is bound at residue Arg-144. Residue 227–230 (DEIQ) participates in pyridoxal 5'-phosphate binding. Lys-256 carries the post-translational modification N6-(pyridoxal phosphate)lysine. Thr-284 provides a ligand contact to N(2)-acetyl-L-ornithine. Residue Thr-285 coordinates pyridoxal 5'-phosphate.

It belongs to the class-III pyridoxal-phosphate-dependent aminotransferase family. ArgD subfamily. As to quaternary structure, homodimer. Requires pyridoxal 5'-phosphate as cofactor.

The protein resides in the cytoplasm. The enzyme catalyses N(2)-acetyl-L-ornithine + 2-oxoglutarate = N-acetyl-L-glutamate 5-semialdehyde + L-glutamate. Its pathway is amino-acid biosynthesis; L-arginine biosynthesis; N(2)-acetyl-L-ornithine from L-glutamate: step 4/4. In Xanthomonas campestris pv. campestris (strain ATCC 33913 / DSM 3586 / NCPPB 528 / LMG 568 / P 25), this protein is Acetylornithine aminotransferase.